Consider the following 369-residue polypeptide: Dual specificity protein phosphatase 1-B (369 aa).

Positions 21–138 (RAHKCLILDC…FSSQCPEFCN (118 aa)) constitute a Rhodanese domain. A Phosphothreonine; by MAPK1 modification is found at T168. The Tyrosine-protein phosphatase domain maps to 175 to 316 (GPVEILPFLY…LLQFESQVLA (142 aa)). C260 acts as the Phosphocysteine intermediate in catalysis.

Belongs to the protein-tyrosine phosphatase family. Non-receptor class dual specificity subfamily. Post-translationally, phosphorylated by MAPK1/ERK2 at Thr-168 and at one or more serine residues in a progesterone-dependent manner. Phosphorylation reduces its rate of degradation but does not seem to affect phosphatase activity.

The protein resides in the nucleus. It catalyses the reaction O-phospho-L-seryl-[protein] + H2O = L-seryl-[protein] + phosphate. The enzyme catalyses O-phospho-L-threonyl-[protein] + H2O = L-threonyl-[protein] + phosphate. It carries out the reaction O-phospho-L-tyrosyl-[protein] + H2O = L-tyrosyl-[protein] + phosphate. In terms of biological role, dual specificity phosphatase that dephosphorylates MAP kinase MAPK1/ERK2 on both 'Thr-188' and 'Tyr-190', regulating its activity during the meiotic cell cycle. The sequence is that of Dual specificity protein phosphatase 1-B from Xenopus laevis (African clawed frog).